A 296-amino-acid chain; its full sequence is Low affinity immunoglobulin gamma Fc region receptor II (296 aa).

Positions 1–42 (MGIPSFLAFPAARRNRAHCTPWHPWGHMLLWTALLFLAPVSG) are cleaved as a signal peptide. Residues 43 to 225 (KPDLPKAVVT…SSSSGPSSMT (183 aa)) are Extracellular-facing. 2 consecutive Ig-like C2-type domains span residues 47–129 (PKAV…DVIS) and 130–212 (DWLL…VNIT). Disulfide bonds link C70-C112 and C151-C195. 6 N-linked (GlcNAc...) asparagine glycosylation sites follow: N79, N86, N105, N179, N186, and N210. A helical membrane pass occupies residues 226–246 (AVAIGTCFAAVAIVAAIITWF). Topologically, residues 247–296 (RLRRKPISAGLTDAENDAARTEAENTVTYSLLSHPDVAEEDSESDYQKRL) are cytoplasmic. The short motif at 273–278 (VTYSLL) is the ITIM motif element. Y275 bears the Phosphotyrosine; by SRC-type Tyr-kinases mark. S288 is subject to Phosphoserine. Phosphotyrosine is present on Y292.

As to quaternary structure, interacts with FGR and LYN. Phosphorylated by SRC-type Tyr-kinases such as LYN, BLK, FYN and SYK. In terms of tissue distribution, higher expression is found in macrophages than in neutrophils.

Its subcellular location is the cell membrane. Binds to the Fc region of immunoglobulins gamma. Low affinity receptor. The protein is Low affinity immunoglobulin gamma Fc region receptor II (FCGR2) of Bos taurus (Bovine).